The primary structure comprises 128 residues: NADH dehydrogenase [ubiquinone] 1 beta subcomplex subunit 6 (128 aa).

The residue at position 2 (S2) is an N-acetylserine. Residue K24 is modified to N6-acetyllysine. The chain crosses the membrane as a helical span at residues 64-86; that stretch reads TYRHSIFAFTHVLIPVWIIHYYL.

Belongs to the complex I NDUFB6 subunit family. In terms of assembly, complex I is composed of 45 different subunits.

The protein resides in the mitochondrion inner membrane. Accessory subunit of the mitochondrial membrane respiratory chain NADH dehydrogenase (Complex I), that is believed not to be involved in catalysis. Complex I functions in the transfer of electrons from NADH to the respiratory chain. The immediate electron acceptor for the enzyme is believed to be ubiquinone. The chain is NADH dehydrogenase [ubiquinone] 1 beta subcomplex subunit 6 (NDUFB6) from Bos taurus (Bovine).